The chain runs to 202 residues: MNLEQIYKDCGAYLEGHFLLSSGKHSQFYLQSAKVLEDPKLAAKLCDELAKIIASYKIEFDSICSPALGGILAGYELARACSKRFIFTERVNKEMTLRRGFEVKKGEKFIICEDIITTGGSALESAKIIESLGGIVVGFAALANRGFCAVENLKSPRKDNAKLPENLPLFTLGNFEFEIYDETNCPLCKKGNKAIKPGSRGN.

Residues lysine 93 and 113 to 121 contribute to the 5-phospho-alpha-D-ribose 1-diphosphate site; that span reads EDIITTGGS. Residues threonine 117 and arginine 145 each coordinate orotate.

The protein belongs to the purine/pyrimidine phosphoribosyltransferase family. PyrE subfamily. Homodimer. Mg(2+) serves as cofactor.

It carries out the reaction orotidine 5'-phosphate + diphosphate = orotate + 5-phospho-alpha-D-ribose 1-diphosphate. The protein operates within pyrimidine metabolism; UMP biosynthesis via de novo pathway; UMP from orotate: step 1/2. In terms of biological role, catalyzes the transfer of a ribosyl phosphate group from 5-phosphoribose 1-diphosphate to orotate, leading to the formation of orotidine monophosphate (OMP). The chain is Orotate phosphoribosyltransferase from Campylobacter jejuni subsp. jejuni serotype O:2 (strain ATCC 700819 / NCTC 11168).